The sequence spans 170 residues: Transmembrane protein 252 (170 aa).

The next 2 helical transmembrane spans lie at 8–28 (ILCA…AFFI) and 40–60 (LIAA…GIFW). Residues 112 to 147 (CPAEREASGIPPPLYTETGLEFQDGNDSHPEAPPSY) are disordered.

The protein resides in the membrane. This is Transmembrane protein 252 (TMEM252) from Homo sapiens (Human).